Reading from the N-terminus, the 363-residue chain is Outer membrane porin F (363 aa).

The first 22 residues, 1 to 22 (MMKRKILAAVIPALLAAATANA), serve as a signal peptide directing secretion.

The protein belongs to the Gram-negative porin family. Homotrimer. Forms mixed heterotrimers with OmpC and with PhoE; other mixed heterotrimers with other porins are also probable.

The protein resides in the cell outer membrane. Its function is as follows. Forms pores that allow passive diffusion of small molecules across the outer membrane. In Salmonella typhimurium (strain SL1344), this protein is Outer membrane porin F.